The primary structure comprises 405 residues: MDHLPMPKFGPLAGLRVVFSGIEIAGPFAGQMFAEWGAEVIWIENVAWADTIRVQPNYPQLSRRNLHALSLNIFKDEGREAFLKLMETTDIFIEASKGPAFARRGITDEVLWQHNPKLVIAHLSGFGQYGTEEYTNLPAYNTIAQAFSGYLIQNGDVDQPMPAFPYTADYFSGLTATTAALAALHKVRETSKGESIDIAMYEVMLRMGQYFMMDYFNGGEMCPRMTKGKDPYYAGCGLYKCADGYIVMELVGITQIAECFKDIGLAHLLGTPEIPEGTQLIHRIECSYGPLVEEKLDAWLAAHTIAEVKERFAELNIACAKVLTVPELESNPQYVARESITQWQTMDGRTCKGPNVMPKFKNNPGQIWRGMPSHGMDTAAILKNIGYSENDIQELVSKGLAKVED.

Residues lysine 97 and arginine 104 each contribute to the CoA site. Aspartate 169 functions as the Nucleophile in the catalytic mechanism.

It belongs to the CoA-transferase III family. CaiB subfamily. Homodimer.

Its subcellular location is the cytoplasm. It catalyses the reaction crotonobetainyl-CoA + (R)-carnitine = crotonobetaine + (R)-carnitinyl-CoA. The catalysed reaction is 4-(trimethylamino)butanoyl-CoA + (R)-carnitine = (R)-carnitinyl-CoA + 4-(trimethylamino)butanoate. The protein operates within amine and polyamine metabolism; carnitine metabolism. Catalyzes the reversible transfer of the CoA moiety from gamma-butyrobetainyl-CoA to L-carnitine to generate L-carnitinyl-CoA and gamma-butyrobetaine. Is also able to catalyze the reversible transfer of the CoA moiety from gamma-butyrobetainyl-CoA or L-carnitinyl-CoA to crotonobetaine to generate crotonobetainyl-CoA. This Escherichia fergusonii (strain ATCC 35469 / DSM 13698 / CCUG 18766 / IAM 14443 / JCM 21226 / LMG 7866 / NBRC 102419 / NCTC 12128 / CDC 0568-73) protein is L-carnitine CoA-transferase.